The following is a 206-amino-acid chain: Small ribosomal subunit protein uS4 (206 aa).

Positions 15 to 46 (MGENIWGRPKSPVNKREYGPGQHGQRRKNKLS) are disordered. The S4 RNA-binding domain maps to 94–154 (RRLDAIVYRA…EKSRQLALVL (61 aa)).

It belongs to the universal ribosomal protein uS4 family. In terms of assembly, part of the 30S ribosomal subunit. Contacts protein S5. The interaction surface between S4 and S5 is involved in control of translational fidelity.

In terms of biological role, one of the primary rRNA binding proteins, it binds directly to 16S rRNA where it nucleates assembly of the body of the 30S subunit. Its function is as follows. With S5 and S12 plays an important role in translational accuracy. The sequence is that of Small ribosomal subunit protein uS4 from Cereibacter sphaeroides (strain ATCC 17029 / ATH 2.4.9) (Rhodobacter sphaeroides).